A 1108-amino-acid chain; its full sequence is AP-3 complex subunit beta (1108 aa).

4 HEAT repeats span residues aspartate 90–isoleucine 127, isoleucine 327–serine 363, glutamate 397–proline 433, and aspartate 434–threonine 471. Residues lysine 480–glutamate 490 show a composition bias toward basic and acidic residues. 3 disordered regions span residues lysine 480 to serine 501, aspartate 736 to glutamate 797, and leucine 811 to glutamate 835. Composition is skewed to acidic residues over residues aspartate 736–phenylalanine 764 and tyrosine 780–glutamate 797.

This sequence belongs to the adaptor complexes large subunit family. In terms of assembly, adaptor protein complex 3 (AP-3) is a heterotetramer composed of two large adaptins (delta-type subunit and beta-type subunit), a medium adaptin (mu-type subunit) and a small adaptin (sigma-type subunit).

It is found in the endosome membrane. Functionally, part of the AP-3 complex, an adaptor-related complex which is essential for the compartmentalization of the endocytic pathway. The protein is AP-3 complex subunit beta (ap3b-1) of Dictyostelium discoideum (Social amoeba).